The chain runs to 119 residues: U-scoloptoxin(16)-Er11a (119 aa).

A signal peptide spans 1 to 19; that stretch reads MKSWTAAVLSLGLIYLSIS.

This sequence belongs to the scoloptoxin-16 family. In terms of processing, contains 4 disulfide bonds. As to expression, expressed by the venom gland.

The protein resides in the secreted. The protein is U-scoloptoxin(16)-Er11a of Ethmostigmus rubripes (Giant centipede).